A 228-amino-acid polypeptide reads, in one-letter code: UPF0173 metal-dependent hydrolase Dred_1740 (228 aa).

Belongs to the UPF0173 family.

The sequence is that of UPF0173 metal-dependent hydrolase Dred_1740 from Desulforamulus reducens (strain ATCC BAA-1160 / DSM 100696 / MI-1) (Desulfotomaculum reducens).